The chain runs to 149 residues: Arginine repressor (149 aa).

It belongs to the ArgR family.

It is found in the cytoplasm. Its pathway is amino-acid biosynthesis; L-arginine biosynthesis [regulation]. Regulates arginine biosynthesis genes. This is Arginine repressor from Listeria innocua serovar 6a (strain ATCC BAA-680 / CLIP 11262).